The following is a 287-amino-acid chain: MKGFIFAGVLVSALICLAEGKPFDNLELVEDDMLMTKEQKEAYLAHQNGRVRRAALRDRYLWPQGKIPYTFSDDIDQAGRELAERAMNHWMSRTCLRFSPRRREHAYIEFQYDGRCRARVGYTGEARQKVSIGSALDPCPLGSVIHELGHGIGFFHEHSRPDRDEYVNINVNNMREGAESNFRKDNGYFVDSRGQDYDYGSIMHYSKYQGNNAFNAVVMEPIQRGAEIGQRDGLSAGDIRQTNLMYKCNAQGDSELQPVNDEDEDKDGGDSKKKPDPKGPKPGEIEE.

A signal peptide spans 1–20 (MKGFIFAGVLVSALICLAEG). Residues 53–249 (RAALRDRYLW…RQTNLMYKCN (197 aa)) form the Peptidase M12A domain. 2 cysteine pairs are disulfide-bonded: Cys95-Cys248 and Cys116-Cys139. His146 provides a ligand contact to Zn(2+). The active site involves Glu147. Residues His150 and His156 each coordinate Zn(2+). The disordered stretch occupies residues 249–287 (NAQGDSELQPVNDEDEDKDGGDSKKKPDPKGPKPGEIEE). The span at 268 to 287 (GGDSKKKPDPKGPKPGEIEE) shows a compositional bias: basic and acidic residues.

The cofactor is Zn(2+). As to expression, nematocyte and pharyngeal gland.

It localises to the secreted. The protein localises to the nematocyst. Functionally, metalloprotease. In Nematostella vectensis (Starlet sea anemone), this protein is Nematocyst expressed protein 6.